Reading from the N-terminus, the 136-residue chain is Small ribosomal subunit protein uS9 (136 aa).

It belongs to the universal ribosomal protein uS9 family.

The chain is Small ribosomal subunit protein uS9 from Borrelia hermsii (strain HS1 / DAH).